The following is a 1787-amino-acid chain: Chitin synthase 5 (1787 aa).

A disordered region spans residues 1–26; that stretch reads MASRRMSMYSVTSEGMGGPRGAGQQS. N-linked (GlcNAc...) asparagine glycosylation occurs at N164. Positions 345–367 are disordered; the sequence is RIRDGDESSDGGRGARTPNSAED. N-linked (GlcNAc...) asparagine glycans are attached at residues N643, N657, N668, and N695. The next 2 helical transmembrane spans lie at 747-767 and 783-803; these read MWVALVWAITFWIPSPLLRYV and FVLCFIIFLLNAAIVFWIIFL. Residues N894 and N1018 are each glycosylated (N-linked (GlcNAc...) asparagine). The helical transmembrane segment at 1055-1075 threads the bilayer; sequence FLLAFAIIMCAVILLKFVSAL. N-linked (GlcNAc...) asparagine glycosylation is present at N1420. Transmembrane regions (helical) follow at residues 1445-1465, 1478-1498, and 1506-1526; these read FVVFVDLFGTIILPATCVYLG, FPLITLIMLAAVYGLQALIFI, and IGWMIIYLLAFPIYSFILPIY. The N-linked (GlcNAc...) asparagine glycan is linked to N1533. A disordered region spans residues 1628-1657; that stretch reads SPNSPAPYQHMSRSPTAYAGPTPYSDNPAA. In terms of domain architecture, DEK-C spans 1729-1785; that stretch reads GPDDFQIVDAIRAVLMEVDLDTVTKKQVRALVEQRLQTELVGERRTFLDRQIDNELA.

The protein belongs to the chitin synthase family. Class V subfamily.

Its subcellular location is the cell membrane. The enzyme catalyses [(1-&gt;4)-N-acetyl-beta-D-glucosaminyl](n) + UDP-N-acetyl-alpha-D-glucosamine = [(1-&gt;4)-N-acetyl-beta-D-glucosaminyl](n+1) + UDP + H(+). Functionally, polymerizes chitin, a structural polymer of the cell wall and septum, by transferring the sugar moiety of UDP-GlcNAc to the non-reducing end of the growing chitin polymer. May play a minor overlapping role with CHS6 in growth and differentiation. The chain is Chitin synthase 5 from Pyricularia oryzae (strain 70-15 / ATCC MYA-4617 / FGSC 8958) (Rice blast fungus).